We begin with the raw amino-acid sequence, 261 residues long: CD40 ligand (261 aa).

The Cytoplasmic portion of the chain corresponds to methionine 1–lysine 22. The chain crosses the membrane as a helical; Signal-anchor for type II membrane protein span at residues isoleucine 23 to leucine 46. The Extracellular portion of the chain corresponds to histidine 47–leucine 261. The THD domain occupies isoleucine 122 to leucine 261. Residues cysteine 178 and cysteine 218 are joined by a disulfide bond. Residue asparagine 240 is glycosylated (N-linked (GlcNAc...) (complex) asparagine; alternate). Asparagine 240 carries N-linked (GlcNAc...) (high mannose) asparagine; alternate glycosylation.

The protein belongs to the tumor necrosis factor family. Homotrimer. Interacts with isoform 3 of CD28. CD40 ligand, soluble form: Exists as either a monomer or a homotrimer. Forms a ternary complex between CD40 and integrins for CD40-CD40LG signaling. Post-translationally, the soluble form derives from the membrane form by proteolytic processing. N-linked glycan is a mixture of high mannose and complex type. Glycan structure does not influence binding affinity to CD40. In terms of processing, not O-glycosylated. In terms of tissue distribution, specifically expressed on activated CD4+ T-lymphocytes.

The protein localises to the cell membrane. It localises to the cell surface. Its subcellular location is the secreted. Functionally, cytokine that acts as a ligand to CD40/TNFRSF5. Costimulates T-cell proliferation and cytokine production. Its cross-linking on T-cells generates a costimulatory signal which enhances the production of IL4 and IL10 in conjunction with the TCR/CD3 ligation and CD28 costimulation. Induces the activation of NF-kappa-B. Induces the activation of kinases MAPK8 and PAK2 in T-cells. Induces tyrosine phosphorylation of isoform 3 of CD28. Mediates B-cell proliferation in the absence of co-stimulus as well as IgE production in the presence of IL4. Involved in immunoglobulin class switching. Its function is as follows. Acts as a ligand for integrins, specifically ITGA5:ITGB1 and ITGAV:ITGB3; both integrins and the CD40 receptor are required for activation of CD40-CD40LG signaling, which have cell-type dependent effects, such as B-cell activation, NF-kappa-B signaling and anti-apoptotic signaling. This is CD40 ligand (CD40LG) from Homo sapiens (Human).